We begin with the raw amino-acid sequence, 766 residues long: 5-methyltetrahydropteroyltriglutamate--homocysteine methyltransferase (766 aa).

5-methyltetrahydropteroyltri-L-glutamate is bound by residues 16-19 and Lys119; that span reads RELK. L-homocysteine-binding positions include 440–442 and Glu493; that span reads IGS. L-methionine-binding positions include 440-442 and Glu493; that span reads IGS. 5-methyltetrahydropteroyltri-L-glutamate is bound by residues 524 to 525 and Trp570; that span reads RC. Residue Asp608 coordinates L-homocysteine. Asp608 is a binding site for L-methionine. Glu614 lines the 5-methyltetrahydropteroyltri-L-glutamate pocket. 3 residues coordinate Zn(2+): His650, Cys652, and Glu674. His703 functions as the Proton donor in the catalytic mechanism. Residue Cys735 coordinates Zn(2+).

This sequence belongs to the vitamin-B12 independent methionine synthase family. Zn(2+) is required as a cofactor.

The catalysed reaction is 5-methyltetrahydropteroyltri-L-glutamate + L-homocysteine = tetrahydropteroyltri-L-glutamate + L-methionine. Its pathway is amino-acid biosynthesis; L-methionine biosynthesis via de novo pathway; L-methionine from L-homocysteine (MetE route): step 1/1. In terms of biological role, catalyzes the transfer of a methyl group from 5-methyltetrahydrofolate to homocysteine resulting in methionine formation. This chain is 5-methyltetrahydropteroyltriglutamate--homocysteine methyltransferase, found in Pseudomonas aeruginosa (strain UCBPP-PA14).